The chain runs to 29 residues: Cyclotide mech-7 (29 aa).

A cross-link (cyclopeptide (Gly-Asp)) is located at residues 1 to 29 (GIPICGETCTIGTCNTPGCTCSWPVCTRD). 3 disulfides stabilise this stretch: C5-C19, C9-C21, and C14-C26.

This is a cyclic peptide. In terms of processing, contains 3 disulfide bonds.

Its function is as follows. Probably participates in a plant defense mechanism (Potential). Binds to and induces leakage in phospholipd membranes, particularly ones containing 1-palmitoyl-2-oleophosphatidylethanolamine (POPE). This chain is Cyclotide mech-7, found in Melicytus chathamicus (Chatham Island mahoe).